We begin with the raw amino-acid sequence, 465 residues long: Lactaldehyde dehydrogenase (465 aa).

Position 220–225 (220–225 (GSVEVG)) interacts with NAD(+). Catalysis depends on residues E240 and C274.

This sequence belongs to the aldehyde dehydrogenase family. In terms of assembly, homotetramer.

The catalysed reaction is (S)-lactaldehyde + NAD(+) + H2O = (S)-lactate + NADH + 2 H(+). It functions in the pathway cofactor biosynthesis; coenzyme F420 biosynthesis. Functionally, involved in F420 biosynthesis through the oxidation of lactaldehyde to lactate. This chain is Lactaldehyde dehydrogenase, found in Methanococcus maripaludis (strain C5 / ATCC BAA-1333).